A 269-amino-acid polypeptide reads, in one-letter code: MMHNSTEESEWEVRPGGMLVQRRDDAASSDHKPLQDPDSASAAFAQTIRITVSHGSSHHDLHISAHATFGDVKKALVQKTGLEASELKILFRGVERDDAEQLQAAGVKDASKLVVVVEDTNKRVEQQPPVVTKEMEKAIAAVNAVTGEVDKLSDRVVALEVAVNGGTQVAVREFDMAAELLMRQLLKLDGIEAEGDAKVQRKAEVRRIQNLQEAVDKLKARCSNPFVDQSKAAAVSTEWESFGNGVGSLNPPPPASPSANVTQDWEKFD.

The interval methionine 1–alanine 40 is disordered. The segment covering glutamine 21–glutamine 35 has biased composition (basic and acidic residues). The Ubiquitin-like domain maps to glutamine 46–lysine 122. Residues alanine 138–lysine 219 form the BAG domain. A disordered region spans residues serine 241–aspartate 269.

Binds to the ATPase domain of HSP70/HSC70 chaperones. Interacts with HSP70-1. In terms of tissue distribution, detected in stems, leaves, flowers and roots.

In terms of biological role, co-chaperone that regulates diverse cellular pathways, such as programmed cell death and stress responses. This chain is BAG family molecular chaperone regulator 4 (BAG4), found in Arabidopsis thaliana (Mouse-ear cress).